Consider the following 115-residue polypeptide: MPTDHEQPCGPRHRSFCLNGGICYVIPTIPSPFCRCIENYTGARCEEVFLPSSSIPSESNLSAAFVVLAVLLTLTIAALCFLCRKGHLQRASSVQCEISLVETNNTRTRHSHREH.

Residues 1 to 62 (MPTDHEQPCG…SSIPSESNLS (62 aa)) lie on the Extracellular side of the membrane. Residues 5 to 46 (HEQPCGPRHRSFCLNGGICYVIPTIPSPFCRCIENYTGARCE) enclose the EGF-like domain. 3 cysteine pairs are disulfide-bonded: Cys9/Cys23, Cys17/Cys34, and Cys36/Cys45. N-linked (GlcNAc...) asparagine glycans are attached at residues Asn39 and Asn60. A helical transmembrane segment spans residues 63–83 (AAFVVLAVLLTLTIAALCFLC). Residues 84-115 (RKGHLQRASSVQCEISLVETNNTRTRHSHREH) lie on the Cytoplasmic side of the membrane.

The protein belongs to the neuregulin family. In terms of assembly, interacts with ERBB4. In terms of processing, proteolytic cleavage close to the plasma membrane on the external face leads to the release of the soluble growth factor form. Extensive glycosylation precedes the proteolytic cleavage. In terms of tissue distribution, highly expressed in pancreas; weakly expressed in muscle.

Its subcellular location is the cell membrane. The protein resides in the secreted. Its function is as follows. Low affinity ligand for the ERBB4 tyrosine kinase receptor. Concomitantly recruits ERBB1 and ERBB2 coreceptors, resulting in ligand-stimulated tyrosine phosphorylation and activation of the ERBB receptors. Does not bind to the ERBB1, ERBB2 and ERBB3 receptors. This Mus musculus (Mouse) protein is Pro-neuregulin-4, membrane-bound isoform (Nrg4).